The sequence spans 187 residues: Orotate phosphoribosyltransferase (187 aa).

5-phospho-alpha-D-ribose 1-diphosphate is bound at residue 110–118 (EDVVTTGGS). Orotate is bound by residues Thr114 and Arg142.

The protein belongs to the purine/pyrimidine phosphoribosyltransferase family. PyrE subfamily. Homodimer. Mg(2+) is required as a cofactor.

It catalyses the reaction orotidine 5'-phosphate + diphosphate = orotate + 5-phospho-alpha-D-ribose 1-diphosphate. It functions in the pathway pyrimidine metabolism; UMP biosynthesis via de novo pathway; UMP from orotate: step 1/2. Functionally, catalyzes the transfer of a ribosyl phosphate group from 5-phosphoribose 1-diphosphate to orotate, leading to the formation of orotidine monophosphate (OMP). This is Orotate phosphoribosyltransferase from Thermotoga neapolitana (strain ATCC 49049 / DSM 4359 / NBRC 107923 / NS-E).